Reading from the N-terminus, the 245-residue chain is tRNA1(Val) (adenine(37)-N6)-methyltransferase (245 aa).

It belongs to the methyltransferase superfamily. tRNA (adenine-N(6)-)-methyltransferase family.

Its subcellular location is the cytoplasm. The enzyme catalyses adenosine(37) in tRNA1(Val) + S-adenosyl-L-methionine = N(6)-methyladenosine(37) in tRNA1(Val) + S-adenosyl-L-homocysteine + H(+). In terms of biological role, specifically methylates the adenine in position 37 of tRNA(1)(Val) (anticodon cmo5UAC). In Escherichia coli (strain SE11), this protein is tRNA1(Val) (adenine(37)-N6)-methyltransferase.